Here is a 217-residue protein sequence, read N- to C-terminus: Lipid transferase CIDEA (217 aa).

A CIDE-N domain is found at 33-110 (PARPFRVSNH…ILEKGQKWTP (78 aa)). The segment at 163–180 (CTSFKAVLRNLLRFMSYA) is amphipathic helix.

This sequence belongs to the CIDE family. Homodimer. Interacts with CIDEC. Directly interacts with CEBPB. Interacts with isoform CLSTN3beta of CLSTN3; inhibiting the lipid transferase activity of CIDEA. Highly expressed in brown adipose tissue and, at lower levels, in white adipose tissue (at protein level). Undetectable in undifferentiated preadipocytes. Expressed in mammary gland during pregnancy and lactation, in epithelial cells, but not in the surrounding adipose tissue. Secreted into milk via milk fat globules.

Its subcellular location is the lipid droplet. It is found in the nucleus. The enzyme catalyses a triacyl-sn-glycerol(in) = a triacyl-sn-glycerol(out). Functionally, lipid transferase that promotes unilocular lipid droplet formation by mediating lipid droplet fusion. Lipid droplet fusion promotes their enlargement, restricting lipolysis and favoring lipid storage. Localizes on the lipid droplet surface, at focal contact sites between lipid droplets, and mediates atypical lipid droplet fusion by promoting directional net neutral lipid transfer from the smaller to larger lipid droplets. The transfer direction may be driven by the internal pressure difference between the contacting lipid droplet pair and occurs at a lower rate than that promoted by CIDEC. May also act as a CEBPB coactivator in epithelial cells to control the expression of a subset of CEBPB downstream target genes, including ID2, IGF1, PRLR, SOCS1, SOCS3, XDH, but not casein. By interacting with CEBPB, strengthens the association of CEBPB with the XDH promoter, increases histone acetylation and dissociates HDAC1 from the promoter. When overexpressed, induces apoptosis; the physiological significance of its role in apoptosis is unclear. This is Lipid transferase CIDEA from Mus musculus (Mouse).